The primary structure comprises 479 residues: Carbohydrate sulfotransferase 3 (479 aa).

Over 1–20 (MEKGLTLPQDCRDFVHSLKM) the chain is Cytoplasmic. Residues 21 to 38 (RSKYALFLVFVVIVFVFI) traverse the membrane as a helical; Signal-anchor for type II membrane protein segment. Residues 39 to 479 (EKENKIISRV…LEERGTFWVT (441 aa)) lie on the Lumenal side of the membrane. N-linked (GlcNAc...) asparagine glycosylation is found at Asn-63, Asn-74, and Asn-96. Residues 108 to 128 (EAAGEEEEEQRKEEEPPRPAV) form a disordered region. Residue 141–147 (TRTGSSF) coordinates 3'-phosphoadenylyl sulfate. Asn-256 is a glycosylation site (N-linked (GlcNAc...) asparagine). 301–309 (RDPRAVLAS) provides a ligand contact to 3'-phosphoadenylyl sulfate. Residues Asn-420 and Asn-464 are each glycosylated (N-linked (GlcNAc...) asparagine).

Belongs to the sulfotransferase 1 family. Gal/GlcNAc/GalNAc subfamily. N-glycosylated. Widely expressed in adult tissues. Expressed in heart, placenta, skeletal muscle and pancreas. Also expressed in various immune tissues such as spleen, lymph node, thymus and appendix.

Its subcellular location is the golgi apparatus membrane. The catalysed reaction is chondroitin beta-D-glucuronate + n 3'-phosphoadenylyl sulfate = chondroitin 6'-sulfate + n adenosine 3',5'-bisphosphate + n H(+). The enzyme catalyses 3'-phosphoadenylyl sulfate + keratan = adenosine 3',5'-bisphosphate + keratan 6'-sulfate.. In terms of biological role, sulfotransferase that utilizes 3'-phospho-5'-adenylyl sulfate (PAPS) as sulfonate donor to catalyze the transfer of sulfate to position 6 of the N-acetylgalactosamine (GalNAc) residue of chondroitin. Chondroitin sulfate constitutes the predominant proteoglycan present in cartilage and is distributed on the surfaces of many cells and extracellular matrices. Catalyzes with a lower efficiency the sulfation of Gal residues of keratan sulfate, another glycosaminoglycan. Can also catalyze the sulfation of the Gal residues in sialyl N-acetyllactosamine (sialyl LacNAc) oligosaccharides. May play a role in the maintenance of naive T-lymphocytes in the spleen. The sequence is that of Carbohydrate sulfotransferase 3 (CHST3) from Homo sapiens (Human).